The following is a 735-amino-acid chain: Dolichyl-diphosphooligosaccharide--protein glycosyltransferase subunit STT3B (735 aa).

The Cytoplasmic segment spans residues 1 to 38 (MGGKSEPAKSESMATKPDLLNTSFFSFKSLKLKTKQQE). Residues 39–59 (LLLRISILGLVYILAFIARLF) traverse the membrane as a helical segment. Over 60–142 (SVLRYESMIH…VHIREVCVLT (83 aa)) the chain is Lumenal. Positions 70 to 72 (EFD) match the DXD motif 1 motif. Aspartate 72 is a binding site for Mn(2+). A helical membrane pass occupies residues 143–161 (APFFASNTTLVAYFFGKEL). At 162–163 (WD) the chain is on the cytoplasmic side. Residues 164-181 (TGAGLVAAVLIAICPGYI) form a helical membrane-spanning segment. At 182–192 (SRSVAGSYDNE) the chain is on the lumenal side. Residues aspartate 190 and glutamate 192 each contribute to the Mn(2+) site. The DXD motif 2 motif lies at 190–192 (DNE). A helical transmembrane segment spans residues 193–212 (AVAIFALLLTFYLFVKAVNT). The Cytoplasmic portion of the chain corresponds to 213 to 214 (GS). A helical membrane pass occupies residues 215-229 (LAWALASAFGYFYMV). The Lumenal segment spans residues 230–234 (SAWGG). Residues 235–251 (YVFIINLVPLYVLVLLI) form a helical membrane-spanning segment. The Cytoplasmic segment spans residues 252 to 256 (TGRYS). A helical transmembrane segment spans residues 257–282 (MRLYIAYNCMYILGMLLAMQIRFVGF). Over 283-290 (QHVQSGEH) the chain is Lumenal. A helical transmembrane segment spans residues 291 to 310 (MGAMGVFLLMQVFYFLDWVK). Topologically, residues 311–326 (YQLNDTKLFQTFLRIT) are cytoplasmic. Residues 327–347 (VTSAILVGGVAVGVGTASGYI) form a helical membrane-spanning segment. The Lumenal segment spans residues 348–380 (SPWTGRFYSLLDPTYAKDHIPIIASVSEHQPTA). Residues 372 to 375 (SVSE) carry the SVSE motif motif. A helical transmembrane segment spans residues 381 to 403 (WSSFMFDYHILLFLFPAGLYFCF). Topologically, residues 404–409 (KRLTDA) are cytoplasmic. The chain crosses the membrane as a helical span at residues 410–426 (TIFIVMYGLTSLYFAGV). The Lumenal portion of the chain corresponds to 427-430 (MVRL). Arginine 429 is a binding site for dolichyl diphosphooligosaccharide. The chain crosses the membrane as a helical span at residues 431–452 (ILVATPAVCLISAIAVSATIKN). Residues 453–494 (LTSLLRTKQKVSQTGSTKGAGSSKASSKVTLDQSQPFQKNGA) lie on the Cytoplasmic side of the membrane. A helical transmembrane segment spans residues 495–515 (IALLVGVFYLLSRYAIHCTWV). Over 516–735 (TAEAYSSPSI…YRVKPPTNRL (220 aa)) the chain is Lumenal. Residues 562–564 (WWD) form an interacts with target acceptor peptide in protein substrate region. Residues 562-566 (WWDYG) carry the WWDYG motif motif. Tyrosine 567 is a dolichyl diphosphooligosaccharide binding site. Asparagine 574 and asparagine 581 each carry an N-linked (GlcNAc...) asparagine glycan. Asparagine 585 is a glycosylation site (N-linked (GlcNAc...) (high mannose) asparagine). The short motif at 629-636 (DINKFLWM) is the DK motif element.

This sequence belongs to the STT3 family. As to quaternary structure, component of the oligosaccharyltransferase (OST) complex. Requires Mg(2+) as cofactor. It depends on Mn(2+) as a cofactor. In terms of tissue distribution, expressed preferentially in the root but also in the shoot.

It localises to the endoplasmic reticulum membrane. The enzyme catalyses a di-trans,poly-cis-dolichyl diphosphooligosaccharide + L-asparaginyl-[protein] = N(4)-(oligosaccharide-(1-&gt;4)-N-acetyl-beta-D-glucosaminyl-(1-&gt;4)-N-acetyl-beta-D-glucosaminyl)-L-asparaginyl-[protein] + a di-trans,poly-cis-dolichyl diphosphate + H(+). It participates in protein modification; protein glycosylation. Its function is as follows. Catalytic subunit of the oligosaccharyl transferase (OST) complex that catalyzes the initial transfer of a defined glycan (Glc(3)Man(9)GlcNAc(2) in eukaryotes) from the lipid carrier dolichol-pyrophosphate to an asparagine residue within an Asn-X-Ser/Thr consensus motif in nascent polypeptide chains, the first step in protein N-glycosylation. N-glycosylation occurs cotranslationally and the complex associates with the Sec61 complex at the channel-forming translocon complex that mediates protein translocation across the endoplasmic reticulum (ER). All subunits are required for a maximal enzyme activity. This subunit contains the active site and the acceptor peptide and donor lipid-linked oligosaccharide (LLO) binding pockets. This Arabidopsis thaliana (Mouse-ear cress) protein is Dolichyl-diphosphooligosaccharide--protein glycosyltransferase subunit STT3B (STT3B).